We begin with the raw amino-acid sequence, 276 residues long: Large ribosomal subunit protein uL2 (276 aa).

The span at 28–38 (RPEKSLTEKLS) shows a compositional bias: basic and acidic residues. 2 disordered regions span residues 28–57 (RPEK…QGGG) and 219–276 (TVRG…RRKK).

The protein belongs to the universal ribosomal protein uL2 family. As to quaternary structure, part of the 50S ribosomal subunit. Forms a bridge to the 30S subunit in the 70S ribosome.

In terms of biological role, one of the primary rRNA binding proteins. Required for association of the 30S and 50S subunits to form the 70S ribosome, for tRNA binding and peptide bond formation. It has been suggested to have peptidyltransferase activity; this is somewhat controversial. Makes several contacts with the 16S rRNA in the 70S ribosome. The protein is Large ribosomal subunit protein uL2 of Exiguobacterium sp. (strain ATCC BAA-1283 / AT1b).